We begin with the raw amino-acid sequence, 303 residues long: Bifunctional protein FolD (303 aa).

NADP(+) contacts are provided by residues 165–167, serine 190, and isoleucine 231; that span reads GRS.

Belongs to the tetrahydrofolate dehydrogenase/cyclohydrolase family. Homodimer.

The catalysed reaction is (6R)-5,10-methylene-5,6,7,8-tetrahydrofolate + NADP(+) = (6R)-5,10-methenyltetrahydrofolate + NADPH. It catalyses the reaction (6R)-5,10-methenyltetrahydrofolate + H2O = (6R)-10-formyltetrahydrofolate + H(+). Its pathway is one-carbon metabolism; tetrahydrofolate interconversion. In terms of biological role, catalyzes the oxidation of 5,10-methylenetetrahydrofolate to 5,10-methenyltetrahydrofolate and then the hydrolysis of 5,10-methenyltetrahydrofolate to 10-formyltetrahydrofolate. This chain is Bifunctional protein FolD, found in Prochlorococcus marinus (strain NATL2A).